The chain runs to 208 residues: Protein-L-isoaspartate O-methyltransferase (208 aa).

Residue Ser-59 is part of the active site.

This sequence belongs to the methyltransferase superfamily. L-isoaspartyl/D-aspartyl protein methyltransferase family.

It is found in the cytoplasm. It catalyses the reaction [protein]-L-isoaspartate + S-adenosyl-L-methionine = [protein]-L-isoaspartate alpha-methyl ester + S-adenosyl-L-homocysteine. Catalyzes the methyl esterification of L-isoaspartyl residues in peptides and proteins that result from spontaneous decomposition of normal L-aspartyl and L-asparaginyl residues. It plays a role in the repair and/or degradation of damaged proteins. This chain is Protein-L-isoaspartate O-methyltransferase, found in Shigella sonnei (strain Ss046).